Reading from the N-terminus, the 124-residue chain is MSAVAEITETTTTEMPTPIVFTDSAAAKVADLIAEEGNPDLKLRVFVQGGGCSGFQYGFTFDEITNDDDTTMTKNGVSLLIDAMSYQYLVGAEIDYKEDLQGAQFVIKNPNASTTCGCGSSFSV.

Iron-sulfur cluster-binding residues include Cys52, Cys116, and Cys118.

Belongs to the HesB/IscA family. Homodimer. Iron-sulfur cluster is required as a cofactor.

Its function is as follows. Required for insertion of 4Fe-4S clusters. This chain is Putative iron-sulfur cluster insertion protein ErpA, found in Delftia acidovorans (strain DSM 14801 / SPH-1).